The chain runs to 524 residues: Tubulin-specific chaperone E (524 aa).

At Ser2 the chain carries N-acetylserine. One can recognise a CAP-Gly domain in the interval 27-71 (GAVPPVAGLWLGVEWDNPERGKHDGSHEGTMYFKCRHPTGGSFVR). 7 LRR repeats span residues 154–175 (NIRV…ILIA), 180–201 (DLEA…PTLT), 206–227 (TLKT…HCAP), 231–253 (VLQE…NALQ), 254–273 (NLRL…QLCL), 279–300 (RLEH…DAEI), and 309–330 (ALTY…NELD). An LRRCT domain is found at 343-381 (NPLTKGDKAEEIIIAKIGQLKTLNRCQILPEERRGAELD). Lys460 bears the N6-acetyllysine mark. The residue at position 492 (Ser492) is a Phosphoserine.

It belongs to the TBCE family. In terms of assembly, supercomplex made of cofactors A to E. Cofactors A and D function by capturing and stabilizing tubulin in a quasi-native conformation. Cofactor E binds to the cofactor D-tubulin complex; interaction with cofactor C then causes the release of tubulin polypeptides that are committed to the native state. Cofactors B and E can form a heterodimer which binds to alpha-tubulin and enhances their ability to dissociate tubulin heterodimers. Interacts with TBCD.

It localises to the cytoplasm. It is found in the cytoskeleton. Tubulin-folding protein; involved in the second step of the tubulin folding pathway and in the regulation of tubulin heterodimer dissociation. Required for correct organization of microtubule cytoskeleton and mitotic splindle, and maintenance of the neuronal microtubule network. The protein is Tubulin-specific chaperone E (Tbce) of Rattus norvegicus (Rat).